Here is a 387-residue protein sequence, read N- to C-terminus: 3-ketoacyl-CoA thiolase (387 aa).

The active-site Acyl-thioester intermediate is cysteine 91. Catalysis depends on proton acceptor residues histidine 343 and cysteine 373.

It belongs to the thiolase-like superfamily. Thiolase family. In terms of assembly, heterotetramer of two alpha chains (FadB) and two beta chains (FadA).

It is found in the cytoplasm. It catalyses the reaction an acyl-CoA + acetyl-CoA = a 3-oxoacyl-CoA + CoA. It functions in the pathway lipid metabolism; fatty acid beta-oxidation. Catalyzes the final step of fatty acid oxidation in which acetyl-CoA is released and the CoA ester of a fatty acid two carbons shorter is formed. This chain is 3-ketoacyl-CoA thiolase, found in Idiomarina loihiensis (strain ATCC BAA-735 / DSM 15497 / L2-TR).